The chain runs to 1407 residues: Metabotropic glutamate receptor-like protein P (1407 aa).

Topologically, residues 1-696 are extracellular; it reads MKFKKKNIYW…KTIKVTSFVK (696 aa). N-linked (GlcNAc...) asparagine glycans are attached at residues Asn43 and Asn58. 2 PbH1 repeats span residues 93 to 118 and 129 to 150; these read ISDIHFKDLTIKNGFGNAISGIFDGG and FVNVALIDNTCSASGGGIFLYN. N-linked (GlcNAc...) asparagine glycosylation is found at Asn162, Asn179, Asn182, Asn230, Asn241, Asn270, Asn368, Asn391, Asn464, Asn512, Asn539, Asn544, Asn554, Asn571, Asn627, and Asn646. One copy of the PbH1 3 repeat lies at 254–279; that stretch reads ISNVIFESCEFIGNRANSTGGLSFLT. A PbH1 4 repeat occupies 452-476; that stretch reads GYSVYIENCEVKNNTGLFKGCFIDT. A helical membrane pass occupies residues 697–717; it reads FLVGTLAAILLIILIISGFIS. Residues 718 to 731 lie on the Cytoplasmic side of the membrane; that stretch reads LKYRKKRVIRYSNP. Residues 732–752 traverse the membrane as a helical segment; it reads LFLCIILVGCIIFLITIPVLF. The Extracellular segment spans residues 753–758; the sequence is GSTSAT. Residues 759–779 traverse the membrane as a helical segment; it reads CKIRFPIIVIGSCLVTSSVFI. Over 780–806 the chain is Cytoplasmic; the sequence is KQFRIWRLIKDIQLLRETNVENKYLLK. The helical transmembrane segment at 807–827 threads the bilayer; the sequence is FISILMVIPIIIVICSFFIFP. Topologically, residues 828–853 are extracellular; it reads THEKYTFNQRDITITHYCSDGSYLAY. A helical transmembrane segment spans residues 854–874; the sequence is VIIFLVYQMAILLFGCYLVIV. Over 875 to 890 the chain is Cytoplasmic; that stretch reads CRKFRSIPGTFNEATY. A helical membrane pass occupies residues 891–911; it reads IGILIYNYTVVLIVAIPLAYV. Residues 912 to 919 are Extracellular-facing; it reads FNKNPLAN. A helical membrane pass occupies residues 920-940; it reads FLIFSISIIVFVLSTIILLFI. Residues 941 to 1407 lie on the Cytoplasmic side of the membrane; the sequence is PKFHFLLRKK…LSPINLSKRK (467 aa). A compositionally biased stretch (polar residues) spans 991 to 1004; it reads QQRQGNLYNNNSLG. Disordered stretches follow at residues 991 to 1072, 1084 to 1248, 1267 to 1351, and 1369 to 1407; these read QQRQ…DPNF, GKRK…SSIG, KKVK…NFNE, and FHQKKQKDSDNRKNYNISPINISDEKVPPLSPINLSKRK. Low complexity predominate over residues 1005-1029; that stretch reads RSISSNTRKRSNNNINNNNNNNSFN. The span at 1030–1040 shows a compositional bias: polar residues; the sequence is MTGFSDSSSTI. Low complexity predominate over residues 1041 to 1071; the sequence is SNPNLTSFTSSPSSLNSSSDSDSTPDFNDPN. The span at 1084-1093 shows a compositional bias: basic and acidic residues; sequence GKRKSIEKNK. Composition is skewed to low complexity over residues 1099–1147, 1154–1246, and 1276–1339; these read PNSP…NTPI, SSKT…SDSS, and SDST…NNNN. A coiled-coil region spans residues 1315-1344; the sequence is NNNNNNNNNNNNNINNNNNNANNNNSDTDD.

It belongs to the G-protein coupled receptor 3 family. GABA-B receptor subfamily.

Its subcellular location is the membrane. The sequence is that of Metabotropic glutamate receptor-like protein P (grlP) from Dictyostelium discoideum (Social amoeba).